A 250-amino-acid polypeptide reads, in one-letter code: 4-hydroxy-tetrahydrodipicolinate reductase (250 aa).

NAD(+)-binding positions include 10–15 (GARGRI), 78–80 (GTT), and 105–108 (APNF). His135 (proton donor/acceptor) is an active-site residue. His136 is a binding site for (S)-2,3,4,5-tetrahydrodipicolinate. The active-site Proton donor is Lys139. Residue 145 to 146 (GT) coordinates (S)-2,3,4,5-tetrahydrodipicolinate. Residues 158-177 (RAEAGSAPQPDATTTALDGA) form a disordered region.

It belongs to the DapB family.

It localises to the cytoplasm. The enzyme catalyses (S)-2,3,4,5-tetrahydrodipicolinate + NAD(+) + H2O = (2S,4S)-4-hydroxy-2,3,4,5-tetrahydrodipicolinate + NADH + H(+). It carries out the reaction (S)-2,3,4,5-tetrahydrodipicolinate + NADP(+) + H2O = (2S,4S)-4-hydroxy-2,3,4,5-tetrahydrodipicolinate + NADPH + H(+). It functions in the pathway amino-acid biosynthesis; L-lysine biosynthesis via DAP pathway; (S)-tetrahydrodipicolinate from L-aspartate: step 4/4. In terms of biological role, catalyzes the conversion of 4-hydroxy-tetrahydrodipicolinate (HTPA) to tetrahydrodipicolinate. The polypeptide is 4-hydroxy-tetrahydrodipicolinate reductase (Streptomyces griseus subsp. griseus (strain JCM 4626 / CBS 651.72 / NBRC 13350 / KCC S-0626 / ISP 5235)).